Here is a 562-residue protein sequence, read N- to C-terminus: Serine/threonine-protein kinase dst3 (562 aa).

In terms of domain architecture, Protein kinase spans 23–285 (FQIVEVVGSG…AQQLLSHPFI (263 aa)). Residues 29 to 37 (VGSGSFGTV) and K59 each bind ATP. The Proton acceptor role is filled by D154. Disordered stretches follow at residues 316–339 (LEEQ…TRAS) and 366–562 (SIMR…NVNI). A compositionally biased stretch (polar residues) spans 322-339 (QRNSSGSKMVSSVPTRAS). Low complexity-rich tracts occupy residues 421–431 (NNNNNNNNTTT), 442–454 (QQQQ…NNNK), and 476–494 (TTPT…TTKT). Over residues 495–522 (GSSLNIKPTNNVNRSTISIGQQKSPLQS) the composition is skewed to polar residues. The span at 542 to 562 (EDEEDEEEFNHEDYEEINVNI) shows a compositional bias: acidic residues.

It belongs to the protein kinase superfamily. STE Ser/Thr protein kinase family. STE20 subfamily. The cofactor is Mg(2+).

It catalyses the reaction L-seryl-[protein] + ATP = O-phospho-L-seryl-[protein] + ADP + H(+). The enzyme catalyses L-threonyl-[protein] + ATP = O-phospho-L-threonyl-[protein] + ADP + H(+). The protein is Serine/threonine-protein kinase dst3 of Dictyostelium discoideum (Social amoeba).